We begin with the raw amino-acid sequence, 183 residues long: ATP synthase subunit delta (183 aa).

It belongs to the ATPase delta chain family. As to quaternary structure, F-type ATPases have 2 components, F(1) - the catalytic core - and F(0) - the membrane proton channel. F(1) has five subunits: alpha(3), beta(3), gamma(1), delta(1), epsilon(1). F(0) has three main subunits: a(1), b(2) and c(10-14). The alpha and beta chains form an alternating ring which encloses part of the gamma chain. F(1) is attached to F(0) by a central stalk formed by the gamma and epsilon chains, while a peripheral stalk is formed by the delta and b chains.

The protein resides in the cell inner membrane. F(1)F(0) ATP synthase produces ATP from ADP in the presence of a proton or sodium gradient. F-type ATPases consist of two structural domains, F(1) containing the extramembraneous catalytic core and F(0) containing the membrane proton channel, linked together by a central stalk and a peripheral stalk. During catalysis, ATP synthesis in the catalytic domain of F(1) is coupled via a rotary mechanism of the central stalk subunits to proton translocation. In terms of biological role, this protein is part of the stalk that links CF(0) to CF(1). It either transmits conformational changes from CF(0) to CF(1) or is implicated in proton conduction. The sequence is that of ATP synthase subunit delta from Rickettsia typhi (strain ATCC VR-144 / Wilmington).